Here is a 1157-residue protein sequence, read N- to C-terminus: uncharacterized protein (1157 aa).

The signal sequence occupies residues 1-18 (MNRNIFITLLISLLALSG). Residue Cys19 is the site of N-palmitoyl cysteine attachment. Cys19 carries the S-diacylglycerol cysteine lipid modification. The next 4 helical transmembrane spans lie at 292–312 (LSVSALLTLYIMFTGFSFLIG), 394–414 (LGFIYIILYLIALYFIFLLIF), 423–443 (ALITIGMIITMAPIFICFMLF), and 458–478 (ISYAIQPIILFVGIAFIGMII). The tract at residues 1134–1157 (QYQKPVENSGRKLRKLEDHLRNMK) is disordered. Positions 1148 to 1157 (KLEDHLRNMK) are enriched in basic and acidic residues.

It belongs to the TrbL/VirB6 family.

It is found in the cell membrane. This is an uncharacterized protein from Rickettsia bellii (strain RML369-C).